The chain runs to 237 residues: Mitochondrial inner membrane protease atp23 (237 aa).

The span at 1–18 (MSTSESSNNGSQPGNQDT) shows a compositional bias: polar residues. The segment at 1–24 (MSTSESSNNGSQPGNQDTGYIPGD) is disordered. Histidine 136 contributes to the a divalent metal cation binding site. The active site involves glutamate 137. Histidine 140 is a binding site for a divalent metal cation.

It belongs to the peptidase M76 family.

Its subcellular location is the mitochondrion inner membrane. Its function is as follows. Has a dual role in the assembly of mitochondrial ATPase. Acts as a protease that removes N-terminal residues of mitochondrial ATPase CF(0) subunit 6 at the intermembrane space side. Also involved in the correct assembly of the membrane-embedded ATPase CF(0) particle, probably mediating association of subunit 6 with the subunit 9 ring. The protein is Mitochondrial inner membrane protease atp23 (atp23) of Aspergillus niger (strain ATCC MYA-4892 / CBS 513.88 / FGSC A1513).